Reading from the N-terminus, the 464-residue chain is Trehalose-6-phosphate synthase (464 aa).

Arginine 10 is a D-glucose 6-phosphate binding site. 23 to 24 contributes to the UDP-alpha-D-glucose binding site; it reads GG. The D-glucose 6-phosphate site is built by tyrosine 81 and aspartate 135. UDP-alpha-D-glucose contacts are provided by arginine 268 and lysine 273. Position 306 (arginine 306) interacts with D-glucose 6-phosphate. UDP-alpha-D-glucose is bound at residue 371–375; it reads LVAKE.

This sequence belongs to the glycosyltransferase 20 family. As to quaternary structure, homotetramer.

The catalysed reaction is D-glucose 6-phosphate + UDP-alpha-D-glucose = alpha,alpha-trehalose 6-phosphate + UDP + H(+). The protein operates within glycan biosynthesis; trehalose biosynthesis. Probably involved in the osmoprotection via the biosynthesis of trehalose. Catalyzes the transfer of glucose from UDP-alpha-D-glucose (UDP-Glc) to D-glucose 6-phosphate (Glc-6-P) to form trehalose-6-phosphate. Acts with retention of the anomeric configuration of the UDP-sugar donor. The chain is Trehalose-6-phosphate synthase from Sinorhizobium fredii (strain NBRC 101917 / NGR234).